Consider the following 325-residue polypeptide: Undecaprenyl-phosphate 4-deoxy-4-formamido-L-arabinose transferase (325 aa).

The next 2 membrane-spanning stretches (helical) occupy residues 235-255 (LSVVGSVIAVSGFLLAVLLMV) and 269-291 (VFTLFALLFIFIGAQFVAMGLLG).

The protein belongs to the glycosyltransferase 2 family.

The protein resides in the cell inner membrane. It catalyses the reaction UDP-4-deoxy-4-formamido-beta-L-arabinose + di-trans,octa-cis-undecaprenyl phosphate = 4-deoxy-4-formamido-alpha-L-arabinopyranosyl di-trans,octa-cis-undecaprenyl phosphate + UDP. Its pathway is glycolipid biosynthesis; 4-amino-4-deoxy-alpha-L-arabinose undecaprenyl phosphate biosynthesis; 4-amino-4-deoxy-alpha-L-arabinose undecaprenyl phosphate from UDP-4-deoxy-4-formamido-beta-L-arabinose and undecaprenyl phosphate: step 1/2. It participates in bacterial outer membrane biogenesis; lipopolysaccharide biosynthesis. Its function is as follows. Catalyzes the transfer of 4-deoxy-4-formamido-L-arabinose from UDP to undecaprenyl phosphate. The modified arabinose is attached to lipid A and is required for resistance to polymyxin and cationic antimicrobial peptides. Essential for virulence in insects. The polypeptide is Undecaprenyl-phosphate 4-deoxy-4-formamido-L-arabinose transferase (Photorhabdus laumondii subsp. laumondii (strain DSM 15139 / CIP 105565 / TT01) (Photorhabdus luminescens subsp. laumondii)).